Here is a 409-residue protein sequence, read N- to C-terminus: Terpredoxin reductase (409 aa).

An FAD-binding site is contributed by 7 to 38 (TTVIVGAGHAGTAAAFFLREFGYHGRVLLLSA). Residue 151–159 (GGGFIGLEI) coordinates NAD(+).

FAD serves as cofactor.

Functionally, the oxidation of alpha-terpineol by cytochrome p450-TERP requires the participation of a flavoprotein, terpredoxin reductase, and an iron-sulfur protein, terpredoxin, to mediate the transfer of electrons from NADH to P450 for oxygen activation. This chain is Terpredoxin reductase (terPA), found in Pseudomonas sp.